The sequence spans 270 residues: Putative phosphatase YxeH (270 aa).

The active-site Nucleophile is the D8. Mg(2+) is bound at residue D8. M9 serves as a coordination point for phosphate. D10 serves as a coordination point for Mg(2+). Phosphate-binding positions include 42–43 (TG) and K196. D219 contacts Mg(2+). N222 provides a ligand contact to phosphate.

This sequence belongs to the HAD-like hydrolase superfamily. Cof family. It depends on Mg(2+) as a cofactor.

This Bacillus subtilis (strain 168) protein is Putative phosphatase YxeH (yxeH).